The sequence spans 181 residues: Acireductone dioxygenase 2 (181 aa).

Residues His-97, His-99, Glu-103, and His-141 each contribute to the Fe(2+) site. The Ni(2+) site is built by His-97, His-99, Glu-103, and His-141.

This sequence belongs to the acireductone dioxygenase (ARD) family. As to quaternary structure, monomer. Fe(2+) serves as cofactor. Requires Ni(2+) as cofactor.

The enzyme catalyses 1,2-dihydroxy-5-(methylsulfanyl)pent-1-en-3-one + O2 = 3-(methylsulfanyl)propanoate + CO + formate + 2 H(+). The catalysed reaction is 1,2-dihydroxy-5-(methylsulfanyl)pent-1-en-3-one + O2 = 4-methylsulfanyl-2-oxobutanoate + formate + 2 H(+). It functions in the pathway amino-acid biosynthesis; L-methionine biosynthesis via salvage pathway; L-methionine from S-methyl-5-thio-alpha-D-ribose 1-phosphate: step 5/6. In terms of biological role, catalyzes 2 different reactions between oxygen and the acireductone 1,2-dihydroxy-3-keto-5-methylthiopentene (DHK-MTPene) depending upon the metal bound in the active site. Fe-containing acireductone dioxygenase (Fe-ARD) produces formate and 2-keto-4-methylthiobutyrate (KMTB), the alpha-ketoacid precursor of methionine in the methionine recycle pathway. Ni-containing acireductone dioxygenase (Ni-ARD) produces methylthiopropionate, carbon monoxide and formate, and does not lie on the methionine recycle pathway. This chain is Acireductone dioxygenase 2, found in Pectobacterium atrosepticum (strain SCRI 1043 / ATCC BAA-672) (Erwinia carotovora subsp. atroseptica).